The following is a 975-amino-acid chain: Homeobox protein cut-like 1 (975 aa).

The CUT 1 DNA-binding region spans 1 to 73 (SRQVKEQLIK…ILALRSIQGR (73 aa)). 2 disordered regions span residues 90–113 (PKRR…GSDE) and 126–148 (LQVQ…TSDD). A coiled-coil region spans residues 113–169 (EAIKSILEQAKRELQVQKTAEPAQPSSTSSSGTSDDAIRSILQQARREMEAQQAALD). S207 is modified (phosphoserine). The disordered stretch occupies residues 209 to 246 (KKPPTAPDTSASTLPNPPALKKESQDAPGLDLPGAAES). Residues K229, K255, and K286 each participate in a glycyl lysine isopeptide (Lys-Gly) (interchain with G-Cter in SUMO2) cross-link. Basic and acidic residues predominate over residues 262–297 (GVWKDHWWSTVQPERKSAAPPEDAKSEEAGGTKEKG). Residues 262–369 (GVWKDHWWST…SKPAKPSVPP (108 aa)) form a disordered region. Over residues 328–351 (RTPQSSELSLTGASRSETPQNSPL) the composition is skewed to polar residues. S349 carries the phosphoserine modification. The segment at residues 374–461 (QYEIYMYQEV…QGVLPVQGQQ (88 aa)) is a DNA-binding region (CUT 2). The segment covering 476–489 (LQQGCVSSESTPKT) has biased composition (polar residues). A disordered region spans residues 476-549 (LQQGCVSSES…SQPATPLPLS (74 aa)). The segment covering 490–506 (SASCSPAPESPMSSSES) has biased composition (low complexity). 2 positions are modified to phosphoserine: S499 and S509. The CUT 3 DNA-binding region spans 557–644 (QELVAMSPEL…VEKLMDMKRM (88 aa)). Positions 652–687 (RRHSSVSDSQPCEPPSVGIDYSQGASPQPQHQLKKP) are disordered. The segment at residues 684–743 (LKKPRVVLAPEEKEALKRAYQQKPYPSPKTIEELATQLNLKTSTVINWFHNYRSRIRREL) is a DNA-binding region (homeobox). A Phosphoserine modification is found at S710. K724 is covalently cross-linked (Glycyl lysine isopeptide (Lys-Gly) (interchain with G-Cter in SUMO2)). The interval 752 to 949 (SQGQAGARHS…DSRDNPLRKK (198 aa)) is disordered. Residues 756–773 (AGARHSPSARSSGAAPSS) are compositionally biased toward low complexity. Phosphoserine is present on S777. Positions 780-813 (GVEAAEGPGAADAEESAPAAAAKSQGGPAEAAVA) are enriched in low complexity. Positions 838 to 847 (PGRRGGGGPA) are enriched in gly residues. Over residues 850–860 (APAAPAAAARG) the composition is skewed to low complexity. The segment covering 861 to 890 (PSRRPGARAKPRRRRRRRRRHARGGGRRYL) has biased composition (basic residues). Low complexity predominate over residues 907–929 (RSSALPSTSAPAAARRPSSLQSL). The residue at position 925 (S925) is a Phosphoserine. The span at 937–946 (GARDSRDNPL) shows a compositional bias: basic and acidic residues. Phosphoserine is present on residues S956 and S966.

Belongs to the CUT homeobox family. As to quaternary structure, interacts with BANP. As cells progress into S phase, a fraction of CUX1 molecules is proteolytically processed into N-terminally truncated proteins of 110 kDa by CTSL. Cell cycle-dependent processing of CUX1 serves to generate a CDP/Cux p110 with distinct DNA binding and transcriptional properties. Post-translationally, phosphorylated by PKA. A broad pattern of expression observed in tissues of diverse origins, such as cartilage, liver, brain, lung, heart and skeletal muscle. There are 2 distinct protein species: the larger one (230-250 kDa) is found mainly in adult brain, lung and heart, and the smaller one (180-190 kDa) predominates in early embryonic tissues.

It is found in the nucleus. Functionally, transcription factor involved in the control of neuronal differentiation in the brain. Regulates dendrite development and branching, and dendritic spine formation in cortical layers II-III. Also involved in the control of synaptogenesis. In addition, it has probably a broad role in mammalian development as a repressor of developmentally regulated gene expression. May act by preventing binding of positively-activing CCAAT factors to promoters. Component of nf-munr repressor; binds to the matrix attachment regions (MARs) (5' and 3') of the immunoglobulin heavy chain enhancer. Represses T-cell receptor (TCR) beta enhancer function by binding to MARbeta, an ATC-rich DNA sequence located upstream of the TCR beta enhancer. Binds to the TH enhancer; may require the basic helix-loop-helix protein TCF4 as a coactivator. Plays a role in cell cycle progression, in particular at the G1/S transition. As cells progress into S phase, a fraction of CUX1 molecules is proteolytically processed into N-terminally truncated proteins of 110 kDa. While CUX1 only transiently binds to DNA and carries the CCAAT-displacement activity, CDP/Cux p110 makes a stable interaction with DNA and stimulates expression of genes such as POLA1. The sequence is that of Homeobox protein cut-like 1 (CUX1) from Canis lupus familiaris (Dog).